A 353-amino-acid chain; its full sequence is MKIDANKEKALNAVLGQIEKQFGKGSIMKLGENRSMDVETISTGSLSLDIALGAGGLPMGRIVEIYGPESSGKTTLTLEVIAAAQREGKVCAFIDAEHALDPIYAKKLGVDIDNLLCSQPDTGEQALEICDALTRSGAVDVIVVDSVAALTPKAEIEGEIGDSHMGLAARMMSQAMRKLAGNLKQTNTMLIFINQIRMKIGVMFGNPETTTGGNALKFYASVRLDIRRTGAIKDRDEVIGNETRVKVVKNKIAAPFKQAEFQILYGQGINSTGELVDLGVAHKLVEKAGAWYSYKGDKIGQGRANAGKYLIENPAVAQEIDVALRALLLTPAAPVADSATGDENIDLETGEVF.

67 to 74 (GPESSGKT) contacts ATP.

It belongs to the RecA family.

Its subcellular location is the cytoplasm. Functionally, can catalyze the hydrolysis of ATP in the presence of single-stranded DNA, the ATP-dependent uptake of single-stranded DNA by duplex DNA, and the ATP-dependent hybridization of homologous single-stranded DNAs. It interacts with LexA causing its activation and leading to its autocatalytic cleavage. This Shewanella sediminis (strain HAW-EB3) protein is Protein RecA.